The primary structure comprises 221 residues: Orotate phosphoribosyltransferase (221 aa).

Lys-27 provides a ligand contact to 5-phospho-alpha-D-ribose 1-diphosphate. Phe-35–Phe-36 serves as a coordination point for orotate. 5-phospho-alpha-D-ribose 1-diphosphate-binding positions include Tyr-75–Lys-76, Arg-102, Lys-103, Lys-106, His-108, and Asp-128–Ala-136. Residues Thr-132 and Arg-160 each coordinate orotate.

Belongs to the purine/pyrimidine phosphoribosyltransferase family. PyrE subfamily. In terms of assembly, homodimer. Requires Mg(2+) as cofactor.

The catalysed reaction is orotidine 5'-phosphate + diphosphate = orotate + 5-phospho-alpha-D-ribose 1-diphosphate. It functions in the pathway pyrimidine metabolism; UMP biosynthesis via de novo pathway; UMP from orotate: step 1/2. Functionally, catalyzes the transfer of a ribosyl phosphate group from 5-phosphoribose 1-diphosphate to orotate, leading to the formation of orotidine monophosphate (OMP). The polypeptide is Orotate phosphoribosyltransferase (Dichelobacter nodosus (strain VCS1703A)).